The primary structure comprises 405 residues: Low-salt glycan biosynthesis sulfotransferase Agl7 (405 aa).

The Ca(2+) site is built by Asp-24, Asp-201, and His-202.

The protein belongs to the sulfatase family. Ca(2+) serves as cofactor.

It participates in protein modification; protein glycosylation. The protein operates within cell surface structure biogenesis; S-layer biogenesis. In terms of biological role, involved in N-glycan biosynthetic pathway that takes place under low-salt conditions (1.75 M instead of 3.4 M). Participates in the formation of the tetrasaccharide present at 'Asn-532' of S-layer glycoprotein Csg, consisting of a sulfated hexose, 2 hexoses and rhamnose. Mediates sulfation of sugar 1 in the tetrasaccharide. The chain is Low-salt glycan biosynthesis sulfotransferase Agl7 from Haloferax volcanii (strain ATCC 29605 / DSM 3757 / JCM 8879 / NBRC 14742 / NCIMB 2012 / VKM B-1768 / DS2) (Halobacterium volcanii).